The sequence spans 438 residues: Probable imidazolonepropionase (438 aa).

4-imidazolone-5-propanoate-binding residues include Tyr-159 and His-192. N-formimidoyl-L-glutamate is bound at residue Tyr-159. A Fe(3+)-binding site is contributed by His-260. Residue His-260 coordinates Zn(2+). Glu-263 contributes to the 4-imidazolone-5-propanoate binding site. Asp-334 is a binding site for Fe(3+). Residue Asp-334 coordinates Zn(2+). Asn-336 lines the N-formimidoyl-L-glutamate pocket.

This sequence belongs to the metallo-dependent hydrolases superfamily. HutI family. The cofactor is Zn(2+). Fe(3+) is required as a cofactor.

The enzyme catalyses 4-imidazolone-5-propanoate + H2O = N-formimidoyl-L-glutamate. The protein operates within amino-acid degradation; L-histidine degradation into L-glutamate; N-formimidoyl-L-glutamate from L-histidine: step 3/3. In Xenopus laevis (African clawed frog), this protein is Probable imidazolonepropionase (amdhd1).